The chain runs to 275 residues: Gap junction gamma-3 protein (275 aa).

Residues 1–22 are Cytoplasmic-facing; sequence MCGSFLRRVAAEESRHPTPVGR. Residues 23 to 43 traverse the membrane as a helical segment; that stretch reads LLLPALLGLRLVLLAAGGTGV. Residues 44 to 77 lie on the Extracellular side of the membrane; it reads FGGGEEQSEFVCHTQQAGCKAVCYDAFHPLSPLR. Residues 78-98 form a helical membrane-spanning segment; it reads FWAFQVTLVAVPSALYMGFIL. Residues 99 to 134 lie on the Cytoplasmic side of the membrane; that stretch reads YHVIWHWEASEKVKTEEETLSQGEKGGEASRAGSSR. The helical transmembrane segment at 135-155 threads the bilayer; it reads LLWAYVAQLGVRLALEGAALG. The Extracellular segment spans residues 156-196; sequence GQYHLYGFRMPSSFVCRLEPCLGSTNCYLSRPSEKSIFLKT. The chain crosses the membrane as a helical span at residues 197–217; the sequence is MFGVTGLCLLFTLLELVLLGL. The Cytoplasmic portion of the chain corresponds to 218-275; sequence GRWWRIWRHKSPSSNYSPTSQSAKRCKAPTDNFPVVEIRERPGEAGERGSEVPLSARP. Residues 254–267 show a composition bias toward basic and acidic residues; it reads EIRERPGEAGERGS. The disordered stretch occupies residues 254-275; it reads EIRERPGEAGERGSEVPLSARP.

Belongs to the connexin family. Gamma-type subfamily. A connexon is composed of a hexamer of connexins.

It localises to the cell membrane. It is found in the cell junction. The protein localises to the gap junction. Its function is as follows. One gap junction consists of a cluster of closely packed pairs of transmembrane channels, the connexons, through which materials of low MW diffuse from one cell to a neighboring cell. The sequence is that of Gap junction gamma-3 protein (GJC3) from Bos taurus (Bovine).